Reading from the N-terminus, the 370-residue chain is Protein STRICTOSIDINE SYNTHASE-LIKE 4 (370 aa).

Positions 1–21 (MVLFFSTRFLFFSIFFPCLIS) are cleaved as a signal peptide. An N-linked (GlcNAc...) asparagine glycan is attached at Asn101. Phosphotyrosine is present on Tyr303.

The protein belongs to the strictosidine synthase family.

It localises to the vacuole. The polypeptide is Protein STRICTOSIDINE SYNTHASE-LIKE 4 (Arabidopsis thaliana (Mouse-ear cress)).